The sequence spans 572 residues: MRTSQYLLSTLKETPADAEVISHQLMLRAGMIRKLASGLYTWLPTGLRVLKKVENIVREEMNNAGAIEVSMPVVQPADLWQESGRWEQYGPELLRFVDRGERPFVLGPTHEEVITDLVRNELSSYKQLPLNFFQIQTKFRDEVRPRFGVMRSREFLMKDAYSFHTSQESLQETYDAMYAAYSRIFSRMGLDFRAVQADTGSIGGNASHEFQVLAQSGEDDIVFSDVSDYAANIELAEAIAPQTPRAAATQEMTLVDTPNAKTIAELVEQFNLPIEKTVKTLLVKAAKDSKSPLVALLVRGDHELNEVKAEKLPHVASPLTFATEEEIRAVINAGPGSLGPVNMSIPVIIDRTVAAMSDFAAGANIDGKHYFGINWDRDVATPVVADIRNVVAGDPSPDGQGTLLIKRGIEVGHIFQLGTKYSEALKASVQGEDGRNQILTMGCYGIGVTRVVAAAIEQNFDERGIVWPDAIAPFQVAILPMNMHKSFRVQELAEKLYSELRAQGIEVLMDDRKERPGVMFADMELIGIPHTIVIGDRNLDNDDIEYKYRRSGEKSLIKTGDIVDYLVKAIKG.

The protein belongs to the class-II aminoacyl-tRNA synthetase family. ProS type 1 subfamily. In terms of assembly, homodimer.

It is found in the cytoplasm. The catalysed reaction is tRNA(Pro) + L-proline + ATP = L-prolyl-tRNA(Pro) + AMP + diphosphate. Functionally, catalyzes the attachment of proline to tRNA(Pro) in a two-step reaction: proline is first activated by ATP to form Pro-AMP and then transferred to the acceptor end of tRNA(Pro). As ProRS can inadvertently accommodate and process non-cognate amino acids such as alanine and cysteine, to avoid such errors it has two additional distinct editing activities against alanine. One activity is designated as 'pretransfer' editing and involves the tRNA(Pro)-independent hydrolysis of activated Ala-AMP. The other activity is designated 'posttransfer' editing and involves deacylation of mischarged Ala-tRNA(Pro). The misacylated Cys-tRNA(Pro) is not edited by ProRS. This Salmonella schwarzengrund (strain CVM19633) protein is Proline--tRNA ligase.